The sequence spans 184 residues: MVEQRRLASTEWVDIVNEDNEVIAQSSREQMRAQRLRHRATYIVVHDGMGKILVQRRTETKDFLPGMLDATAGGVVQADEQLLESARREAEEELGIAGVPFAEHGLFYFEDQHCRVWGALFSCVSHGPFALQEDEVSEVCWLTPEEITARCDEFTPDSLKALALWMTRNAKNEAALQEKPEETE.

The 129-residue stretch at 36-164 (LRHRATYIVV…TPDSLKALAL (129 aa)) folds into the Nudix hydrolase domain. The Nudix box motif lies at 73–95 (GGVVQADEQLLESARREAEEELG). Residues Glu89 and Glu93 each contribute to the Mg(2+) site.

This sequence belongs to the Nudix hydrolase family. Mg(2+) serves as cofactor.

This is an uncharacterized protein from Salmonella typhi.